Here is a 124-residue protein sequence, read N- to C-terminus: Cytochrome b5-like protein (124 aa).

Residues 5–22 form a helical membrane-spanning segment; sequence YLLILIIIYVIKIICRYF. The Cytochrome b5 heme-binding domain occupies 49 to 124; it reads NQINQVNQVN…ILSKYKITEK (76 aa). Heme-binding residues include histidine 84 and histidine 108.

This sequence belongs to the cytochrome b5 family.

The protein resides in the membrane. Functionally, membrane bound hemoprotein which function as an electron carrier for several membrane bound oxygenases. The protein is Cytochrome b5-like protein of Acanthamoeba polyphaga (Amoeba).